Consider the following 205-residue polypeptide: MRLRNDKFALSELNEFKFFIKNYPFNIKEDDILEIGSGKGEMISQMALLNPNQRFIAIEKYPTVAKKIMQKIKELNLENLYISCIDASKLSENFIGKTNTIWLTFSDPWPKKRHEKRRLTYKSFLDQYKFLLKDKNSNFYLKTDNDLFFNYSLESLQENNWNLKFVTGDLHNSIYNETNIKTGYEIKWMDKTKINFLIASKGENA.

The S-adenosyl-L-methionine site is built by glutamate 34, glutamate 59, aspartate 86, and aspartate 107. The active site involves aspartate 107. A substrate-binding site is contributed by lysine 111. The interaction with RNA stretch occupies residues 113 to 118 (RHEKRR). Substrate is bound by residues aspartate 144 and 182–185 (TGYE).

The protein belongs to the class I-like SAM-binding methyltransferase superfamily. TrmB family.

It carries out the reaction guanosine(46) in tRNA + S-adenosyl-L-methionine = N(7)-methylguanosine(46) in tRNA + S-adenosyl-L-homocysteine. It participates in tRNA modification; N(7)-methylguanine-tRNA biosynthesis. Functionally, catalyzes the formation of N(7)-methylguanine at position 46 (m7G46) in tRNA. In Mycoplasmopsis synoviae (strain 53) (Mycoplasma synoviae), this protein is tRNA (guanine-N(7)-)-methyltransferase.